The chain runs to 1377 residues: Pleckstrin homology-like domain family B member 1 (1377 aa).

Ser-51 carries the phosphoserine modification. Residues 64–125 enclose the FHA domain; it reads TVIGSAARDI…LTQGCMLCLG (62 aa). Arg-131 is subject to Asymmetric dimethylarginine. The disordered stretch occupies residues 150 to 187; it reads RAPGPPYSPVPAESESLVNGNHTPQTATRGPSACASHS. Residues 165–178 are compositionally biased toward polar residues; that stretch reads SLVNGNHTPQTATR. Phosphoserine is present on residues Ser-192, Ser-220, and Ser-223. Disordered stretches follow at residues 211 to 334 and 370 to 535; these read AAGK…LTDS and GALS…GSFS. Residues 252–273 show a composition bias toward low complexity; it reads SPAFSPLSSPASSGSCASHSPS. The segment covering 288–303 has biased composition (polar residues); sequence RSSSYHLALQPPQSRP. Basic and acidic residues predominate over residues 309–322; it reads ESPRLSRKGGHERP. Ser-324, Ser-334, Ser-381, Ser-404, Ser-430, Ser-443, Ser-461, Ser-470, Ser-489, and Ser-501 each carry phosphoserine. Residues 456–473 show a composition bias toward low complexity; sequence ELPPLSPSLSRRALSPLP. Residues 481-491 show a composition bias toward basic and acidic residues; it reads KLNREVAESPR. Arg-512 is modified (omega-N-methylarginine). A phosphoserine mark is found at Ser-518 and Ser-520. Residue Thr-522 is modified to Phosphothreonine. Residues Ser-533, Ser-539, Ser-551, Ser-555, Ser-563, Ser-578, and Ser-583 each carry the phosphoserine modification. Residues 653–663 are compositionally biased toward low complexity; sequence PSRGLAGASGR. 3 disordered regions span residues 653 to 707, 936 to 1019, and 1119 to 1138; these read PSRG…APST, TGPA…GSLP, and SMET…DNMS. Basic and acidic residues predominate over residues 677–691; that stretch reads ESMERSDEENLKEEC. Position 678 is a phosphoserine (Ser-678). A coiled-coil region spans residues 683–809; that stretch reads DEENLKEECS…TETKLFEDLE (127 aa). 2 positions are modified to phosphoserine: Ser-971 and Ser-1017. Over residues 971-992 the composition is skewed to low complexity; the sequence is SPLPRTRSGPLPSSSGSSSSSS. The span at 1009–1018 shows a compositional bias: polar residues; it reads LLTQNGTGSL. The stretch at 1144 to 1208 forms a coiled coil; that stretch reads DMGKIEEMEK…ARRQQLVEKE (65 aa). Residues 1256–1370 enclose the PH domain; it reads SKVCRGYLVK…WMDVIVTGAE (115 aa).

This is Pleckstrin homology-like domain family B member 1 (PHLDB1) from Homo sapiens (Human).